Consider the following 360-residue polypeptide: Phospho-N-acetylmuramoyl-pentapeptide-transferase (360 aa).

Helical transmembrane passes span 27 to 47 (GALI…ISSL), 70 to 90 (GTPT…SILW), 93 to 113 (LSSV…AIGF), 134 to 154 (LALE…AGQE), 168 to 188 (LLLN…VGAG), 205 to 225 (VMVA…AIFA), 239 to 259 (LSVI…FNAP), 262 to 282 (AIFM…TVAV), 288 to 308 (IVLA…IIQV), and 337 to 357 (QVVI…LSTL).

Belongs to the glycosyltransferase 4 family. MraY subfamily. The cofactor is Mg(2+).

The protein localises to the cell inner membrane. The enzyme catalyses UDP-N-acetyl-alpha-D-muramoyl-L-alanyl-gamma-D-glutamyl-meso-2,6-diaminopimeloyl-D-alanyl-D-alanine + di-trans,octa-cis-undecaprenyl phosphate = di-trans,octa-cis-undecaprenyl diphospho-N-acetyl-alpha-D-muramoyl-L-alanyl-D-glutamyl-meso-2,6-diaminopimeloyl-D-alanyl-D-alanine + UMP. It functions in the pathway cell wall biogenesis; peptidoglycan biosynthesis. In terms of biological role, catalyzes the initial step of the lipid cycle reactions in the biosynthesis of the cell wall peptidoglycan: transfers peptidoglycan precursor phospho-MurNAc-pentapeptide from UDP-MurNAc-pentapeptide onto the lipid carrier undecaprenyl phosphate, yielding undecaprenyl-pyrophosphoryl-MurNAc-pentapeptide, known as lipid I. In Chelativorans sp. (strain BNC1), this protein is Phospho-N-acetylmuramoyl-pentapeptide-transferase.